The primary structure comprises 338 residues: Nicotinate-nucleotide--dimethylbenzimidazole phosphoribosyltransferase (338 aa).

The active-site Proton acceptor is the glutamate 305.

The protein belongs to the CobT family.

It carries out the reaction 5,6-dimethylbenzimidazole + nicotinate beta-D-ribonucleotide = alpha-ribazole 5'-phosphate + nicotinate + H(+). Its pathway is nucleoside biosynthesis; alpha-ribazole biosynthesis; alpha-ribazole from 5,6-dimethylbenzimidazole: step 1/2. Catalyzes the synthesis of alpha-ribazole-5'-phosphate from nicotinate mononucleotide (NAMN) and 5,6-dimethylbenzimidazole (DMB). The polypeptide is Nicotinate-nucleotide--dimethylbenzimidazole phosphoribosyltransferase (Sinorhizobium fredii (strain NBRC 101917 / NGR234)).